We begin with the raw amino-acid sequence, 76 residues long: Putative phosphotransferase enzyme IIA component YyzE (76 aa).

Positions Met-1–Ser-76 constitute a PTS EIIA type-1 domain. Residue His-22 is the Tele-phosphohistidine intermediate of the active site.

The protein localises to the cytoplasm. The phosphoenolpyruvate-dependent sugar phosphotransferase system (PTS), a major carbohydrate active -transport system, catalyzes the phosphorylation of incoming sugar substrates concomitant with their translocation across the cell membrane. The sequence is that of Putative phosphotransferase enzyme IIA component YyzE (yyzE) from Bacillus subtilis (strain 168).